We begin with the raw amino-acid sequence, 148 residues long: Small ribosomal subunit protein bS16 (148 aa).

The span at 111–122 (AAAGEEPVAEAT) shows a compositional bias: low complexity. The tract at residues 111-148 (AAAGEEPVAEATTPKKKGGKKAEAEDKAEEQKSEEGQA) is disordered. Basic and acidic residues predominate over residues 130 to 148 (KKAEAEDKAEEQKSEEGQA).

It belongs to the bacterial ribosomal protein bS16 family.

The protein is Small ribosomal subunit protein bS16 of Saccharopolyspora erythraea (strain ATCC 11635 / DSM 40517 / JCM 4748 / NBRC 13426 / NCIMB 8594 / NRRL 2338).